Consider the following 173-residue polypeptide: NADH-ubiquinone oxidoreductase chain 6 (173 aa).

5 consecutive transmembrane segments (helical) span residues 1 to 21 (MTYVMSLFLLGLVLGLVAVAS), 25 to 45 (PYFGALSLVGVAAFGCGVLIW), 53 to 73 (LVLFLIYLGGMLVVFAYSAAL), 82 to 102 (LGSWPVVSVYFGYFFFVFGIL), and 142 to 162 (GVLLLGAWVLLLTLLVVLELV).

It belongs to the complex I subunit 6 family.

It is found in the mitochondrion membrane. It carries out the reaction a ubiquinone + NADH + 5 H(+)(in) = a ubiquinol + NAD(+) + 4 H(+)(out). Functionally, core subunit of the mitochondrial membrane respiratory chain NADH dehydrogenase (Complex I) that is believed to belong to the minimal assembly required for catalysis. Complex I functions in the transfer of electrons from NADH to the respiratory chain. The immediate electron acceptor for the enzyme is believed to be ubiquinone. In Tetraodon nigroviridis (Spotted green pufferfish), this protein is NADH-ubiquinone oxidoreductase chain 6 (MT-ND6).